A 249-amino-acid polypeptide reads, in one-letter code: Chymase (249 aa).

An N-terminal signal peptide occupies residues 1 to 19 (MHCLPLTLLLLLLCSRAEA). A propeptide spans 20–21 (EE) (activation peptide). The Peptidase S1 domain occupies 22–245 (IIGGTESKPH…YRPWINKVLK (224 aa)). A disulfide bridge connects residues cysteine 51 and cysteine 67. Active-site charge relay system residues include histidine 66 and aspartate 110. 2 cysteine pairs are disulfide-bonded: cysteine 144–cysteine 209 and cysteine 175–cysteine 188. The active-site Charge relay system is the serine 203.

Belongs to the peptidase S1 family. Granzyme subfamily.

The protein resides in the secreted. It localises to the cytoplasmic granule. The enzyme catalyses Preferential cleavage: Phe-|-Xaa &gt; Tyr-|-Xaa &gt; Trp-|-Xaa &gt; Leu-|-Xaa.. Functionally, major secreted protease of mast cells with suspected roles in vasoactive peptide generation, extracellular matrix degradation, and regulation of gland secretion. In Canis lupus familiaris (Dog), this protein is Chymase (CMA1).